Reading from the N-terminus, the 86-residue chain is CLAVATA3/ESR (CLE)-related protein 7 (86 aa).

An N-terminal signal peptide occupies residues 1–22 (MASKALLLFVMLTFLLVIEMEG). N-linked (GlcNAc...) asparagine glycosylation occurs at Asn-46. The tract at residues 63–86 (VDRFSPGGPDPQHHSYPLSSKPRI) is disordered. Residues Pro-68 and Pro-71 each carry the hydroxyproline modification. Pro-71 carries O-linked (Ara...) hydroxyproline glycosylation.

The protein belongs to the CLV3/ESR signal peptide family. In terms of processing, the O-glycosylation (arabinosylation) of the hydroxyproline Pro-71 enhances binding affinity of the CLE7p peptide for its receptor. In terms of tissue distribution, expressed in roots and seedlings.

It is found in the secreted. The protein localises to the extracellular space. Extracellular signal peptide that regulates cell fate. The protein is CLAVATA3/ESR (CLE)-related protein 7 of Arabidopsis thaliana (Mouse-ear cress).